A 401-amino-acid polypeptide reads, in one-letter code: Argininosuccinate synthase (401 aa).

ATP-binding positions include Ala-9–Ser-17 and Ala-35. Tyr-86 lines the L-citrulline pocket. Gly-116 provides a ligand contact to ATP. Residues Thr-118, Asn-122, and Asp-123 each coordinate L-aspartate. Asn-122 lines the L-citrulline pocket. 5 residues coordinate L-citrulline: Arg-126, Ser-175, Ser-184, Glu-261, and Tyr-273.

The protein belongs to the argininosuccinate synthase family. Type 1 subfamily. In terms of assembly, homotetramer.

It localises to the cytoplasm. It catalyses the reaction L-citrulline + L-aspartate + ATP = 2-(N(omega)-L-arginino)succinate + AMP + diphosphate + H(+). Its pathway is amino-acid biosynthesis; L-arginine biosynthesis; L-arginine from L-ornithine and carbamoyl phosphate: step 2/3. The protein is Argininosuccinate synthase of Aquifex aeolicus (strain VF5).